Consider the following 601-residue polypeptide: DNA replication licensing factor MCM3 (601 aa).

Positions 180–386 (PINLLSKSIA…LDRRLSQHVL (207 aa)) constitute an MCM domain. 229 to 236 (GDPSTAKS) contributes to the ATP binding site. Positions 361-364 (SRFD) match the Arginine finger motif.

The protein belongs to the MCM family. In terms of assembly, component of the MCM2-7 complex.

Its subcellular location is the nucleus. It localises to the chromosome. The protein localises to the nucleoplasm. It carries out the reaction ATP + H2O = ADP + phosphate + H(+). Its function is as follows. Acts as a component of the MCM2-7 complex (MCM complex) which is the replicative helicase essential for DNA replication initiation and elongation in eukaryotic cells. Required for DNA replication and cell proliferation. The active ATPase sites in the MCM2-7 ring are formed through the interaction surfaces of two neighboring subunits such that a critical structure of a conserved arginine finger motif is provided in trans relative to the ATP-binding site of the Walker A box of the adjacent subunit. The polypeptide is DNA replication licensing factor MCM3 (Entamoeba histolytica (strain ATCC 30459 / HM-1:IMSS / ABRM)).